We begin with the raw amino-acid sequence, 125 residues long: Large ribosomal subunit protein eL8 (125 aa).

Belongs to the eukaryotic ribosomal protein eL8 family. Part of the 50S ribosomal subunit. Probably part of the RNase P complex.

The protein localises to the cytoplasm. Its function is as follows. Multifunctional RNA-binding protein that recognizes the K-turn motif in ribosomal RNA, the RNA component of RNase P, box H/ACA, box C/D and box C'/D' sRNAs. This is Large ribosomal subunit protein eL8 from Metallosphaera sedula (strain ATCC 51363 / DSM 5348 / JCM 9185 / NBRC 15509 / TH2).